Here is a 124-residue protein sequence, read N- to C-terminus: Ribonuclease pancreatic (124 aa).

A disordered region spans residues 1–24 (KETAAAKFQRQHMDSSTSSASSSN). Substrate contacts are provided by Lys7 and Arg10. His12 functions as the Proton acceptor in the catalytic mechanism. 4 disulfide bridges follow: Cys26–Cys84, Cys40–Cys95, Cys58–Cys110, and Cys65–Cys72. Asn34 is a glycosylation site (N-linked (GlcNAc...) asparagine; in river-breed only). Residues 41–45 (KPVNT), Lys66, and Arg85 contribute to the substrate site. His119 (proton donor) is an active-site residue.

Belongs to the pancreatic ribonuclease family. As to quaternary structure, monomer. Interacts with and forms tight 1:1 complexes with RNH1. Dimerization of two such complexes may occur. Interaction with RNH1 inhibits this protein. Post-translationally, swamp breed ribonuclease do not bind carbohydrate, but there is evidence of a polymorphic form that does. In terms of tissue distribution, pancreas.

The protein localises to the secreted. It carries out the reaction an [RNA] containing cytidine + H2O = an [RNA]-3'-cytidine-3'-phosphate + a 5'-hydroxy-ribonucleotide-3'-[RNA].. The catalysed reaction is an [RNA] containing uridine + H2O = an [RNA]-3'-uridine-3'-phosphate + a 5'-hydroxy-ribonucleotide-3'-[RNA].. In terms of biological role, endonuclease that catalyzes the cleavage of RNA on the 3' side of pyrimidine nucleotides. Acts on single-stranded and double-stranded RNA. The chain is Ribonuclease pancreatic (RNASE1) from Bubalus bubalis (Domestic water buffalo).